The chain runs to 147 residues: Deoxyuridine 5'-triphosphate nucleotidohydrolase (147 aa).

Substrate is bound by residues 67–69, Asn-80, and 84–86; these read RSG and TID.

The protein belongs to the dUTPase family. Mg(2+) serves as cofactor.

The catalysed reaction is dUTP + H2O = dUMP + diphosphate + H(+). It participates in pyrimidine metabolism; dUMP biosynthesis; dUMP from dCTP (dUTP route): step 2/2. Its function is as follows. This enzyme is involved in nucleotide metabolism: it produces dUMP, the immediate precursor of thymidine nucleotides and it decreases the intracellular concentration of dUTP so that uracil cannot be incorporated into DNA. The polypeptide is Deoxyuridine 5'-triphosphate nucleotidohydrolase (Syntrophotalea carbinolica (strain DSM 2380 / NBRC 103641 / GraBd1) (Pelobacter carbinolicus)).